A 480-amino-acid chain; its full sequence is Ribulose bisphosphate carboxylase large chain (480 aa).

Residues 1–2 (MS) constitute a propeptide that is removed on maturation. Position 3 is an N-acetylproline (Pro3). Lys14 is subject to N6,N6,N6-trimethyllysine. Substrate contacts are provided by Asn123 and Thr173. Lys175 (proton acceptor) is an active-site residue. A substrate-binding site is contributed by Lys177. Residues Lys201, Asp203, and Glu204 each coordinate Mg(2+). Lys201 bears the N6-carboxylysine mark. Residue His294 is the Proton acceptor of the active site. Residues Arg295, His327, and Ser379 each contribute to the substrate site.

The protein belongs to the RuBisCO large chain family. Type I subfamily. In terms of assembly, heterohexadecamer of 8 large chains and 8 small chains; disulfide-linked. The disulfide link is formed within the large subunit homodimers. Mg(2+) is required as a cofactor. The disulfide bond which can form in the large chain dimeric partners within the hexadecamer appears to be associated with oxidative stress and protein turnover.

The protein resides in the plastid. It is found in the chloroplast. It catalyses the reaction 2 (2R)-3-phosphoglycerate + 2 H(+) = D-ribulose 1,5-bisphosphate + CO2 + H2O. The enzyme catalyses D-ribulose 1,5-bisphosphate + O2 = 2-phosphoglycolate + (2R)-3-phosphoglycerate + 2 H(+). Its function is as follows. RuBisCO catalyzes two reactions: the carboxylation of D-ribulose 1,5-bisphosphate, the primary event in carbon dioxide fixation, as well as the oxidative fragmentation of the pentose substrate in the photorespiration process. Both reactions occur simultaneously and in competition at the same active site. The polypeptide is Ribulose bisphosphate carboxylase large chain (Acorus calamus var. americanus (American sweet flag)).